The following is a 1025-amino-acid chain: Multidrug resistance protein MdtC (1025 aa).

12 helical membrane-spanning segments follow: residues 3 to 23, 333 to 353, 360 to 380, 387 to 407, 431 to 451, 469 to 489, 528 to 548, 853 to 873, 875 to 895, 897 to 917, 953 to 973, and 984 to 1004; these read FFALFIYRPVATILLSVAITL, EVEQTLIISVALVILVVFLFL, IIPAVSVPVSLIGTFAAMYLC, LSLMALTIATGFVVDDAIVVL, VGFTVLSMSLSLVAVFLPLLL, VAIGISLLVSLTLTPMMCGWM, LVGVVLLGTIALNIWLYISIP, VILIIAAIATVYIVLGILYES, VHPLTILSTLPSAGVGALLAL, LFNAPFSLIALIGIMLLIGIV, PIMMTTLAALFGALPLVLSGG, and ITIVGGLVMSQLLTLYTTPVV.

It belongs to the resistance-nodulation-cell division (RND) (TC 2.A.6) family. MdtC subfamily. In terms of assembly, part of a tripartite efflux system composed of MdtA, MdtB and MdtC. MdtC forms a heteromultimer with MdtB.

It is found in the cell inner membrane. The MdtABC tripartite complex confers resistance against novobiocin and deoxycholate. This chain is Multidrug resistance protein MdtC, found in Escherichia coli O9:H4 (strain HS).